A 538-amino-acid chain; its full sequence is MAVISKKIPAPDKVEIKTALISVFDKTGIVDLARALSARGVRLLSTGGTFKAITAAGLAVTDVSEITGFPEIMDGRVKTLHPTVHGGLLAIRDDSEHQDAMKQHGIEGIDLAVINLYPFEEVRAAGGDYPTTVENIDIGGPAMIRASAKNHAYVTTLTDPADYAELLEQLSADDGKTAYTFRQRMAAKAYARTAAYDAMISNWFAETLSIDTPRHRVIGGALKEEMRYGENPHQKAAFYVTGEKRPGVSTAALLQGKQLSYNNINDTDAAYELVAEFLPEKAPACAIIKHANPCGVATGSSLVEAYRRALACDSVSAFGGIIALNQTLDAETAEEIVKLFTEVIIAPDVTEEAKAIVARKPNLRLLSAGGLPDPRAVGLTAKTVSGGLLVQSRDNGMVEDLELKVVTRRAPTAQELDDMKFAFKVGKHVKSNAVVYAKDGQTAGIGAGQMSRVDSARIAALKAEEAAKALGLAVPMTHGSAVASEAFLPFADGLLSMIAAGATAVIQPGGSMRDQEVIDAANEHGVAMVFTGMRHFRH.

In terms of domain architecture, MGS-like spans 8–158 (IPAPDKVEIK…KNHAYVTTLT (151 aa)).

This sequence belongs to the PurH family.

The catalysed reaction is (6R)-10-formyltetrahydrofolate + 5-amino-1-(5-phospho-beta-D-ribosyl)imidazole-4-carboxamide = 5-formamido-1-(5-phospho-D-ribosyl)imidazole-4-carboxamide + (6S)-5,6,7,8-tetrahydrofolate. It catalyses the reaction IMP + H2O = 5-formamido-1-(5-phospho-D-ribosyl)imidazole-4-carboxamide. It participates in purine metabolism; IMP biosynthesis via de novo pathway; 5-formamido-1-(5-phospho-D-ribosyl)imidazole-4-carboxamide from 5-amino-1-(5-phospho-D-ribosyl)imidazole-4-carboxamide (10-formyl THF route): step 1/1. The protein operates within purine metabolism; IMP biosynthesis via de novo pathway; IMP from 5-formamido-1-(5-phospho-D-ribosyl)imidazole-4-carboxamide: step 1/1. The chain is Bifunctional purine biosynthesis protein PurH from Rhizobium johnstonii (strain DSM 114642 / LMG 32736 / 3841) (Rhizobium leguminosarum bv. viciae).